The following is a 196-amino-acid chain: MNEAVSPGALSTLFTDARTHNGWRETPVSDETLQELYALMKWGPTSANCSPARIVFIRTAEGKERLRPALSSGNLQKTLTAPVTAIVAWDSEFYERLPLLFPHGDARSWFTSSPQLAEETAFRNSSMQAAYLIVACRALGLDTGPMSGFDRQHVDDAFFAGSTLKSNLLINIGYGDSSKLFARLPRLSFEEACGLL.

The protein belongs to the nitroreductase family. HadB/RutE subfamily. FMN is required as a cofactor.

It catalyses the reaction 3-hydroxypropanoate + NADP(+) = 3-oxopropanoate + NADPH + H(+). May reduce toxic product malonic semialdehyde to 3-hydroxypropionic acid, which is excreted. The sequence is that of Probable malonic semialdehyde reductase RutE from Shigella flexneri serotype 5b (strain 8401).